Here is a 347-residue protein sequence, read N- to C-terminus: Protein RecA (347 aa).

Residue 67–74 (GPESSGKT) coordinates ATP.

Belongs to the RecA family.

Its subcellular location is the cytoplasm. Functionally, can catalyze the hydrolysis of ATP in the presence of single-stranded DNA, the ATP-dependent uptake of single-stranded DNA by duplex DNA, and the ATP-dependent hybridization of homologous single-stranded DNAs. It interacts with LexA causing its activation and leading to its autocatalytic cleavage. This chain is Protein RecA, found in Paenarthrobacter aurescens (strain TC1).